The primary structure comprises 90 residues: Inner kinetochore subunit MHF1 (90 aa).

The protein belongs to the TAF9 family. CENP-S/MHF1 subfamily. As to quaternary structure, the MHF histone-fold complex is a heterotetramer of 2 MHF1-MHF2 heterodimers. Together with MPH1/FANCM, forms the FANCM-MHF complex. Component of the inner kinetochore constitutive centromere-associated network (CCAN) (also known as central kinetochore CTF19 complex in yeast), which is composed of at least AME1, CHL4, CNN1, CTF3, CTF19, IML3, MCM16, MCM21, MCM22, MHF1, MHF2, MIF2, NKP1, NKP2, OKP1 and WIP1.

In terms of biological role, dsDNA-binding component of a FANCM-MHF complex involved in DNA damage repair and genome maintenance. FANCM-MHF promotes gene conversion at blocked replication forks, probably by reversal of the stalled fork. Component of the kinetochore, a multiprotein complex that assembles on centromeric DNA and attaches chromosomes to spindle microtubules, mediating chromosome segregation and sister chromatid segregation during meiosis and mitosis. Component of the inner kinetochore constitutive centromere-associated network (CCAN), which serves as a structural platform for outer kinetochore assembly. The polypeptide is Inner kinetochore subunit MHF1 (Saccharomyces cerevisiae (strain ATCC 204508 / S288c) (Baker's yeast)).